The sequence spans 557 residues: Dihydroxy-acid dehydratase (557 aa).

Aspartate 78 contributes to the Mg(2+) binding site. Cysteine 119 lines the [2Fe-2S] cluster pocket. The Mg(2+) site is built by aspartate 120 and lysine 121. Lysine 121 is subject to N6-carboxylysine. Cysteine 192 is a binding site for [2Fe-2S] cluster. Residue glutamate 442 coordinates Mg(2+). Serine 468 acts as the Proton acceptor in catalysis.

The protein belongs to the IlvD/Edd family. As to quaternary structure, homodimer. [2Fe-2S] cluster is required as a cofactor. It depends on Mg(2+) as a cofactor.

The catalysed reaction is (2R)-2,3-dihydroxy-3-methylbutanoate = 3-methyl-2-oxobutanoate + H2O. The enzyme catalyses (2R,3R)-2,3-dihydroxy-3-methylpentanoate = (S)-3-methyl-2-oxopentanoate + H2O. The protein operates within amino-acid biosynthesis; L-isoleucine biosynthesis; L-isoleucine from 2-oxobutanoate: step 3/4. It functions in the pathway amino-acid biosynthesis; L-valine biosynthesis; L-valine from pyruvate: step 3/4. Functions in the biosynthesis of branched-chain amino acids. Catalyzes the dehydration of (2R,3R)-2,3-dihydroxy-3-methylpentanoate (2,3-dihydroxy-3-methylvalerate) into 2-oxo-3-methylpentanoate (2-oxo-3-methylvalerate) and of (2R)-2,3-dihydroxy-3-methylbutanoate (2,3-dihydroxyisovalerate) into 2-oxo-3-methylbutanoate (2-oxoisovalerate), the penultimate precursor to L-isoleucine and L-valine, respectively. The protein is Dihydroxy-acid dehydratase of Bacillus cereus (strain ATCC 10987 / NRS 248).